Here is a 324-residue protein sequence, read N- to C-terminus: MSLYMLVSTFAVAFIITVIGVPLFIPFLVKLKFGQSIRDEGPKMHEKKSGTPTMGAVVFITAMLISFLIFSFIGGEVSAATWLLFIALALFGALGFLDDYIKVVQKRNLGLTSKQKFLGQVAISILFYLVYHFSDFAETLNIPFTNIEVDLGWFFVIFILFWLVGFSNAVNLTDGLDGLVSGLSVIAFSAFGVIAFYQEQMDVAIFCFAIVGGMLGFLLFNKNPAKIFMGDTGSLALGGSIAAVSILVHQEWLLLLIGIIFVIETASVILQVFYFKATKGKRIFRMTPIHHHFELGGWSEWRVVLTFWGIGLVGAVISVCVVIF.

A run of 10 helical transmembrane segments spans residues 9 to 29 (TFAV…PFLV), 54 to 74 (MGAV…SFIG), 77 to 97 (VSAA…LGFL), 117 to 137 (FLGQ…SDFA), 147 to 167 (IEVD…VGFS), 176 to 196 (LDGL…VIAF), 201 to 221 (MDVA…LLFN), 227 to 247 (IFMG…VSIL), 253 to 273 (LLLL…LQVF), and 304 to 324 (VLTF…VVIF).

It belongs to the glycosyltransferase 4 family. MraY subfamily. Mg(2+) is required as a cofactor.

Its subcellular location is the cell membrane. The catalysed reaction is UDP-N-acetyl-alpha-D-muramoyl-L-alanyl-gamma-D-glutamyl-meso-2,6-diaminopimeloyl-D-alanyl-D-alanine + di-trans,octa-cis-undecaprenyl phosphate = di-trans,octa-cis-undecaprenyl diphospho-N-acetyl-alpha-D-muramoyl-L-alanyl-D-glutamyl-meso-2,6-diaminopimeloyl-D-alanyl-D-alanine + UMP. The protein operates within cell wall biogenesis; peptidoglycan biosynthesis. In terms of biological role, catalyzes the initial step of the lipid cycle reactions in the biosynthesis of the cell wall peptidoglycan: transfers peptidoglycan precursor phospho-MurNAc-pentapeptide from UDP-MurNAc-pentapeptide onto the lipid carrier undecaprenyl phosphate, yielding undecaprenyl-pyrophosphoryl-MurNAc-pentapeptide, known as lipid I. This chain is Phospho-N-acetylmuramoyl-pentapeptide-transferase, found in Listeria welshimeri serovar 6b (strain ATCC 35897 / DSM 20650 / CCUG 15529 / CIP 8149 / NCTC 11857 / SLCC 5334 / V8).